The sequence spans 517 residues: Anthranilate--CoA ligase (517 aa).

AMP is bound at residue 161-172; that stretch reads LQYTSGSTGAPK.

The protein belongs to the ATP-dependent AMP-binding enzyme family. As to quaternary structure, monomer.

It catalyses the reaction anthranilate + ATP + CoA = anthraniloyl-CoA + AMP + diphosphate. Its function is as follows. Catalyzes the formation of anthraniloyl-CoA, which is the priming step for entry into the Pseudomonas quinolone signal (PQS) biosynthetic pathway. Also active on a variety of aromatic substrates, including benzoate and chloro and fluoro derivatives of anthranilate. This Pseudomonas aeruginosa (strain ATCC 15692 / DSM 22644 / CIP 104116 / JCM 14847 / LMG 12228 / 1C / PRS 101 / PAO1) protein is Anthranilate--CoA ligase (pqsA).